A 431-amino-acid chain; its full sequence is Serine/threonine-protein kinase Sgk1 (431 aa).

Positions methionine 1–isoleucine 60 are necessary for localization to the mitochondria. The interval proline 66 to histidine 92 is disordered. The residue at position 74 (serine 74) is a Phosphoserine. Serine 78 carries the phosphoserine; by MAPK7 modification. Residues glutamine 81–proline 91 are compositionally biased toward polar residues. Positions phenylalanine 98 to phenylalanine 355 constitute a Protein kinase domain. Residues isoleucine 104–valine 112 and lysine 127 each bind ATP. A Nuclear localization signal motif is present at residues lysine 131–lysine 141. Residue aspartate 222 is the Proton acceptor of the active site. The residue at position 256 (threonine 256) is a Phosphothreonine; by PDPK1. Residues serine 356–leucine 431 enclose the AGC-kinase C-terminal domain. Threonine 369 is modified (phosphothreonine; by PKA). Phosphoserine is present on residues serine 397, serine 401, and serine 422.

The protein belongs to the protein kinase superfamily. AGC Ser/Thr protein kinase family. As to quaternary structure, homodimer; disulfide-linked. Forms a trimeric complex with FBXW7 and NOTCH1. Interacts with MAPK3/ERK1, MAPK1/ERK2, MAP2K1/MEK1, MAP2K2/MEK2, NEDD4, NEDD4L, MAPT/TAU, MAPK7, CREB1, SLC9A3R2/NHERF2 and KCNJ1/ROMK1. Associates with the mammalian target of rapamycin complex 2 (mTORC2) via an interaction with MAPKAP1/SIN1. Post-translationally, regulated by phosphorylation. Activated by phosphorylation on Ser-422 by mTORC2, transforming it into a substrate for PDPK1 which phosphorylates it on Thr-256. Phosphorylation on Ser-397 and Ser-401 are also essential for its activity. Phosphorylation on Ser-78 by MAPK7 is required for growth factor-induced cell cycle progression. In terms of processing, ubiquitinated by NEDD4L; which promotes proteasomal degradation. Ubiquitinated by SYVN1 at the endoplasmic reticulum; which promotes rapid proteasomal degradation and maintains a high turnover rate in resting cells. Isoform 2 shows enhanced stability. Expressed in most tissues with highest levels in the pancreas, followed by placenta, kidney and lung. Isoform 2 is strongly expressed in brain and pancreas, weaker in heart, placenta, lung, liver and skeletal muscle.

The protein localises to the cytoplasm. The protein resides in the nucleus. It is found in the endoplasmic reticulum membrane. Its subcellular location is the cell membrane. It localises to the mitochondrion. It catalyses the reaction L-seryl-[protein] + ATP = O-phospho-L-seryl-[protein] + ADP + H(+). The enzyme catalyses L-threonyl-[protein] + ATP = O-phospho-L-threonyl-[protein] + ADP + H(+). Two specific sites, one in the kinase domain (Thr-256) and the other in the C-terminal regulatory region (Ser-422), need to be phosphorylated for its full activation. Phosphorylation at Ser-397 and Ser-401 are also essential for its activity. Activated by WNK1, WNK2, WNK3 and WNK4; which promote phosphorylation by mTORC2. Its function is as follows. Serine/threonine-protein kinase which is involved in the regulation of a wide variety of ion channels, membrane transporters, cellular enzymes, transcription factors, neuronal excitability, cell growth, proliferation, survival, migration and apoptosis. Plays an important role in cellular stress response. Contributes to regulation of renal Na(+) retention, renal K(+) elimination, salt appetite, gastric acid secretion, intestinal Na(+)/H(+) exchange and nutrient transport, insulin-dependent salt sensitivity of blood pressure, salt sensitivity of peripheral glucose uptake, cardiac repolarization and memory consolidation. Up-regulates Na(+) channels: SCNN1A/ENAC, SCN5A and ASIC1/ACCN2, K(+) channels: KCNJ1/ROMK1, KCNA1-5, KCNQ1-5 and KCNE1, epithelial Ca(2+) channels: TRPV5 and TRPV6, chloride channels: BSND, CLCN2 and CFTR, glutamate transporters: SLC1A3/EAAT1, SLC1A2 /EAAT2, SLC1A1/EAAT3, SLC1A6/EAAT4 and SLC1A7/EAAT5, amino acid transporters: SLC1A5/ASCT2, SLC38A1/SN1 and SLC6A19, creatine transporter: SLC6A8, Na(+)/dicarboxylate cotransporter: SLC13A2/NADC1, Na(+)-dependent phosphate cotransporter: SLC34A2/NAPI-2B, glutamate receptor: GRIK2/GLUR6. Up-regulates carriers: SLC9A3/NHE3, SLC12A1/NKCC2, SLC12A3/NCC, SLC5A3/SMIT, SLC2A1/GLUT1, SLC5A1/SGLT1 and SLC15A2/PEPT2. Regulates enzymes: GSK3A/B, PMM2 and Na(+)/K(+) ATPase, and transcription factors: CTNNB1 and nuclear factor NF-kappa-B. Stimulates sodium transport into epithelial cells by enhancing the stability and expression of SCNN1A/ENAC. This is achieved by phosphorylating the NEDD4L ubiquitin E3 ligase, promoting its interaction with 14-3-3 proteins, thereby preventing it from binding to SCNN1A/ENAC and targeting it for degradation. Regulates store-operated Ca(+2) entry (SOCE) by stimulating ORAI1 and STIM1. Regulates KCNJ1/ROMK1 directly via its phosphorylation or indirectly via increased interaction with SLC9A3R2/NHERF2. Phosphorylates MDM2 and activates MDM2-dependent ubiquitination of p53/TP53. Phosphorylates MAPT/TAU and mediates microtubule depolymerization and neurite formation in hippocampal neurons. Phosphorylates SLC2A4/GLUT4 and up-regulates its activity. Phosphorylates APBB1/FE65 and promotes its localization to the nucleus. Phosphorylates MAPK1/ERK2 and activates it by enhancing its interaction with MAP2K1/MEK1 and MAP2K2/MEK2. Phosphorylates FBXW7 and plays an inhibitory role in the NOTCH1 signaling. Phosphorylates FOXO1 resulting in its relocalization from the nucleus to the cytoplasm. Phosphorylates FOXO3, promoting its exit from the nucleus and interference with FOXO3-dependent transcription. Phosphorylates BRAF and MAP3K3/MEKK3 and inhibits their activity. Phosphorylates SLC9A3/NHE3 in response to dexamethasone, resulting in its activation and increased localization at the cell membrane. Phosphorylates CREB1. Necessary for vascular remodeling during angiogenesis. Sustained high levels and activity may contribute to conditions such as hypertension and diabetic nephropathy. Isoform 2 exhibited a greater effect on cell plasma membrane expression of SCNN1A/ENAC and Na(+) transport than isoform 1. This chain is Serine/threonine-protein kinase Sgk1 (SGK1), found in Homo sapiens (Human).